The chain runs to 319 residues: Beta-ketoacyl-[acyl-carrier-protein] synthase III (319 aa).

Catalysis depends on residues C115 and H246. Residues 247–251 (QANLR) are ACP-binding. N276 is an active-site residue.

The protein belongs to the thiolase-like superfamily. FabH family. In terms of assembly, homodimer.

It localises to the cytoplasm. It carries out the reaction malonyl-[ACP] + acetyl-CoA + H(+) = 3-oxobutanoyl-[ACP] + CO2 + CoA. It functions in the pathway lipid metabolism; fatty acid biosynthesis. In terms of biological role, catalyzes the condensation reaction of fatty acid synthesis by the addition to an acyl acceptor of two carbons from malonyl-ACP. Catalyzes the first condensation reaction which initiates fatty acid synthesis and may therefore play a role in governing the total rate of fatty acid production. Possesses both acetoacetyl-ACP synthase and acetyl transacylase activities. Its substrate specificity determines the biosynthesis of branched-chain and/or straight-chain of fatty acids. This is Beta-ketoacyl-[acyl-carrier-protein] synthase III from Coxiella burnetii (strain RSA 493 / Nine Mile phase I).